Reading from the N-terminus, the 385-residue chain is Urotensin-2 receptor (385 aa).

Topologically, residues 1–53 are extracellular; the sequence is MALSLESTSFPMLAVSRSTASELPGGFNVSHNSSWTGPTDPSSLQDLVATGVI. N-linked (GlcNAc...) asparagine glycans are attached at residues Asn28 and Asn32. A helical transmembrane segment spans residues 54-76; sequence GAVLSTMGVVGVVGNVYTLVVMC. The Cytoplasmic portion of the chain corresponds to 77–86; the sequence is RFLRASASMY. Residues 87–112 form a helical membrane-spanning segment; it reads VYVVNLALADLLYLLSIPFIVATYVT. The Extracellular segment spans residues 113–123; it reads KDWHFGDVGCR. The cysteines at positions 122 and 198 are disulfide-linked. The helical transmembrane segment at 124 to 145 threads the bilayer; the sequence is VLFSLDFLTMHASIFTLTIMSS. The Cytoplasmic segment spans residues 146 to 166; that stretch reads ERYAAVLRPLDTVQRSKGYRK. The chain crosses the membrane as a helical span at residues 167-185; that stretch reads LLALGTWLLALLLTLPMML. At 186–208 the chain is on the extracellular side; the sequence is AIRLVRRGSKSLCLPAWGPRAHR. A helical transmembrane segment spans residues 209–231; the sequence is TYLTLLFGTSIVGPGLVIGLLYI. Topologically, residues 232–257 are cytoplasmic; sequence RLARAYWLSQQASFKQTRRLPNPRVL. The helical transmembrane segment at 258–283 threads the bilayer; sequence YLILGIVLLFWACFLPFWLWQLLAQY. Residues 284–298 lie on the Extracellular side of the membrane; sequence HQAMPLTPETARIIN. A helical transmembrane segment spans residues 299–320; it reads YLTACLTYGNSCINPFLYTLLT. Topologically, residues 321 to 385 are cytoplasmic; that stretch reads KNYREYLRGR…SPVPPNGAFV (65 aa).

The protein belongs to the G-protein coupled receptor 1 family.

The protein resides in the cell membrane. Its function is as follows. High affinity receptor for urotensin-2 and urotensin-2B. The activity of this receptor is mediated by a G-protein that activate a phosphatidylinositol-calcium second messenger system. In Mus musculus (Mouse), this protein is Urotensin-2 receptor (Uts2r).